Reading from the N-terminus, the 212-residue chain is Small ribosomal subunit protein uS19m (212 aa).

The N-terminal 29 residues, 1 to 29 (MAFCTKLGGHWKQGVNVPVSSMLGSLRYM), are a transit peptide targeting the mitochondrion. The region spanning 31-109 (TKLYIGGLSP…FNISVNVAKD (79 aa)) is the RRM domain.

It belongs to the universal ribosomal protein uS19 family. As to quaternary structure, component of the mitochondrial ribosome small subunit.

It localises to the mitochondrion. The RNA-binding domain found in RPS19 may functionally replace the missing mitochondrial RPS13. This Arabidopsis thaliana (Mouse-ear cress) protein is Small ribosomal subunit protein uS19m (RPS19).